Consider the following 236-residue polypeptide: Thioredoxin-like 2-2, chloroplastic (236 aa).

Residues Met-1 to Arg-82 constitute a chloroplast transit peptide. A Thioredoxin domain is found at Val-83–Thr-220. Residues Cys-135 and Cys-138 each act as nucleophile in the active site. An intrachain disulfide couples Cys-135 to Cys-138.

This sequence belongs to the thioredoxin family.

It is found in the plastid. The protein resides in the chloroplast. Its function is as follows. Thiol-disulfide oxidoreductase that may participate in various redox reactions. Possesses insulin disulfide bonds reducing activity. The protein is Thioredoxin-like 2-2, chloroplastic of Arabidopsis thaliana (Mouse-ear cress).